Consider the following 68-residue polypeptide: Large ribosomal subunit protein bL28 (68 aa).

The tract at residues 1 to 30 (MAKICDHCGKKPQSGNNVSHANNKSKRRFE) is disordered. A compositionally biased stretch (polar residues) spans 13–22 (QSGNNVSHAN).

It belongs to the bacterial ribosomal protein bL28 family.

The chain is Large ribosomal subunit protein bL28 from Solidesulfovibrio magneticus (strain ATCC 700980 / DSM 13731 / RS-1) (Desulfovibrio magneticus).